We begin with the raw amino-acid sequence, 604 residues long: Elongation factor 4 (604 aa).

Residues 2-184 (DHIRNFSIIA…AVITRMPAPR (183 aa)) enclose the tr-type G domain. GTP is bound by residues 14–19 (DHGKST) and 131–134 (NKMD).

The protein belongs to the TRAFAC class translation factor GTPase superfamily. Classic translation factor GTPase family. LepA subfamily.

The protein resides in the cell inner membrane. The enzyme catalyses GTP + H2O = GDP + phosphate + H(+). Required for accurate and efficient protein synthesis under certain stress conditions. May act as a fidelity factor of the translation reaction, by catalyzing a one-codon backward translocation of tRNAs on improperly translocated ribosomes. Back-translocation proceeds from a post-translocation (POST) complex to a pre-translocation (PRE) complex, thus giving elongation factor G a second chance to translocate the tRNAs correctly. Binds to ribosomes in a GTP-dependent manner. This is Elongation factor 4 from Methylibium petroleiphilum (strain ATCC BAA-1232 / LMG 22953 / PM1).